A 430-amino-acid chain; its full sequence is KIN17-like protein (430 aa).

The segment at Cys28–His50 adopts a C2H2-type zinc-finger fold. The tract at residues Gln51–Lys160 is winged helix-turn-helix (wHTH). A coiled-coil region spans residues Glu147–Ser183. Positions Lys155–Arg158 match the Nuclear localization signal (NLS) motif. 2 disordered regions span residues Arg179 to Ala230 and Glu261 to Ala284. Positions Leu191–Ala224 are enriched in acidic residues. Residues Glu261–Lys278 show a composition bias toward basic and acidic residues. The stretch at Asp283–Lys312 forms a coiled coil. Residues Gly319–Thr370 are C-terminal subdomain A. The interval Gly376–Lys427 is C-terminal subdomain B.

Belongs to the KIN17 family.

The protein localises to the nucleus. In Oryza sativa subsp. japonica (Rice), this protein is KIN17-like protein.